The primary structure comprises 500 residues: Probable cytosol aminopeptidase (500 aa).

Mn(2+)-binding residues include Lys-274 and Asp-279. The active site involves Lys-286. The Mn(2+) site is built by Asp-297, Asp-356, and Glu-358. Arg-360 is a catalytic residue.

Belongs to the peptidase M17 family. Requires Mn(2+) as cofactor.

It is found in the cytoplasm. The enzyme catalyses Release of an N-terminal amino acid, Xaa-|-Yaa-, in which Xaa is preferably Leu, but may be other amino acids including Pro although not Arg or Lys, and Yaa may be Pro. Amino acid amides and methyl esters are also readily hydrolyzed, but rates on arylamides are exceedingly low.. It carries out the reaction Release of an N-terminal amino acid, preferentially leucine, but not glutamic or aspartic acids.. In terms of biological role, presumably involved in the processing and regular turnover of intracellular proteins. Catalyzes the removal of unsubstituted N-terminal amino acids from various peptides. The protein is Probable cytosol aminopeptidase of Saccharophagus degradans (strain 2-40 / ATCC 43961 / DSM 17024).